Here is a 192-residue protein sequence, read N- to C-terminus: Transposon Tn552 DNA-invertase BinR (192 aa).

Residues 1–136 form the Resolvase/invertase-type recombinase catalytic domain; that stretch reads MKIGYARVST…AGRIAARARG (136 aa). Ser-9 functions as the O-(5'-phospho-DNA)-serine intermediate in the catalytic mechanism. Positions 163-182 form a DNA-binding region, H-T-H motif; it reads IKTIAEQWKVSRTTIYRYLN.

It belongs to the site-specific recombinase resolvase family.

In terms of biological role, DNA-invertase, mediating the inversion of inv. This Staphylococcus aureus protein is Transposon Tn552 DNA-invertase BinR (resR).